The sequence spans 312 residues: HPr kinase/phosphorylase (312 aa).

Catalysis depends on residues H139 and K160. 154 to 161 lines the ATP pocket; that stretch reads GDSGIGKS. S161 contacts Mg(2+). D178 serves as the catalytic Proton acceptor; for phosphorylation activity. Proton donor; for dephosphorylation activity. The tract at residues 202-211 is important for the catalytic mechanism of both phosphorylation and dephosphorylation; sequence IEIRGVGIID. A Mg(2+)-binding site is contributed by E203. R244 is an active-site residue. The segment at 265 to 270 is important for the catalytic mechanism of dephosphorylation; it reads PVKTGR.

It belongs to the HPrK/P family. In terms of assembly, homohexamer. The cofactor is Mg(2+).

It carries out the reaction [HPr protein]-L-serine + ATP = [HPr protein]-O-phospho-L-serine + ADP + H(+). It catalyses the reaction [HPr protein]-O-phospho-L-serine + phosphate + H(+) = [HPr protein]-L-serine + diphosphate. Its function is as follows. Catalyzes the ATP- as well as the pyrophosphate-dependent phosphorylation of a specific serine residue in HPr, a phosphocarrier protein of the phosphoenolpyruvate-dependent sugar phosphotransferase system (PTS). HprK/P also catalyzes the pyrophosphate-producing, inorganic phosphate-dependent dephosphorylation (phosphorolysis) of seryl-phosphorylated HPr (P-Ser-HPr). The two antagonistic activities of HprK/P are regulated by several intracellular metabolites, which change their concentration in response to the absence or presence of rapidly metabolisable carbon sources (glucose, fructose, etc.) in the growth medium. Therefore, by controlling the phosphorylation state of HPr, HPrK/P is a sensor enzyme that plays a major role in the regulation of carbon metabolism and sugar transport: it mediates carbon catabolite repression (CCR), and regulates PTS-catalyzed carbohydrate uptake and inducer exclusion. The sequence is that of HPr kinase/phosphorylase from Streptococcus pneumoniae (strain ATCC BAA-255 / R6).